The primary structure comprises 319 residues: ADP-ribosyl cyclase/cyclic ADP-ribose hydrolase 2 (319 aa).

An N-terminal signal peptide occupies residues 1 to 33; the sequence is MAVQACALSLRLGLWMSLLLPVLPGAGARAAGA. Cystine bridges form between Cys52-Cys68, Cys84-Cys164, and Cys145-Cys158. Asn67 and Asn96 each carry an N-linked (GlcNAc...) asparagine glycan. Trp110 serves as a coordination point for NAD(+). Trp110 is a binding site for nicotinamide. Asn149 is a glycosylation site (N-linked (GlcNAc...) asparagine). Trp173 provides a ligand contact to NAD(+). Asn193 carries N-linked (GlcNAc...) asparagine glycosylation. Residue Glu211 participates in NAD(+) binding. 2 cysteine pairs are disulfide-bonded: Cys239-Cys260 and Cys272-Cys281. Ser294 carries GPI-anchor amidated serine lipidation. Residues 295 to 319 constitute a propeptide that is removed on maturation; it reads PALHAIGDISLIISLLVALASSSQA.

The protein belongs to the ADP-ribosyl cyclase family. Homodimer. Pancreatic islets, kidney, spleen, heart, thymus, intestine and salivary gland.

The protein localises to the cell membrane. The enzyme catalyses NAD(+) + H2O = ADP-D-ribose + nicotinamide + H(+). The catalysed reaction is NAD(+) = cyclic ADP-beta-D-ribose + nicotinamide + H(+). It carries out the reaction cyclic ADP-beta-D-ribose + H2O = ADP-D-ribose. Its function is as follows. Catalyzes both the synthesis of cyclic ADP-beta-D-ribose (cADPR) from NAD(+), and its hydrolysis to ADP-D-ribose (ADPR). Cyclic ADPR is known to serve as an endogenous second messenger that elicits calcium release from intracellular stores, and thus regulates the mobilization of intracellular calcium. May be involved in pre-B-cell growth. This is ADP-ribosyl cyclase/cyclic ADP-ribose hydrolase 2 (Bst1) from Rattus norvegicus (Rat).